Reading from the N-terminus, the 43-residue chain is Protein PsbN (43 aa).

A helical transmembrane segment spans residues 5–25; it reads LILSIFIFSLLLGITSYSIYI.

This sequence belongs to the PsbN family.

Its subcellular location is the plastid. The protein localises to the chloroplast thylakoid membrane. In terms of biological role, may play a role in photosystem I and II biogenesis. In Cyanidium caldarium (Red alga), this protein is Protein PsbN.